The primary structure comprises 616 residues: Chaperone protein HscA (616 aa).

It belongs to the heat shock protein 70 family.

In terms of biological role, chaperone involved in the maturation of iron-sulfur cluster-containing proteins. Has a low intrinsic ATPase activity which is markedly stimulated by HscB. Involved in the maturation of IscU. The polypeptide is Chaperone protein HscA (Cronobacter sakazakii (strain ATCC BAA-894) (Enterobacter sakazakii)).